Reading from the N-terminus, the 942-residue chain is Probable serine/threonine-protein kinase DDB_G0279719 (942 aa).

One can recognise a Protein kinase domain in the interval 4–617 (YEVVKLIGVG…IDLILQNKLF (614 aa)). ATP is bound by residues 10-18 (IGVGGEAKA) and K33. 4 disordered regions span residues 109–170 (NNNQ…INNN), 247–303 (SFSN…NGNT), 352–371 (QPPQSTSTSKTDSSPTGADV), and 408–445 (NDPSSHSQPQHQQLHSSPQQLPQSPRLKPNIESSLNIN). The segment covering 258–272 (NSNDSNLHQSSSNSS) has biased composition (low complexity). Over residues 288–303 (SPGTSTPYQKGSNGNT) the composition is skewed to polar residues. Low complexity-rich tracts occupy residues 353 to 367 (PPQSTSTSKTDSSPT) and 410 to 432 (PSSHSQPQHQQLHSSPQQLPQSP). Catalysis depends on D487, which acts as the Proton acceptor. The interval 642–686 (TNSKSNSSNNLNNSNSNNDIINNNNNNNSSNNINNNNIVNLNNSY) is disordered. Residues 675-703 (NNNNIVNLNNSYNNKQDKCEQRNKSLNQN) adopt a coiled-coil conformation.

The protein belongs to the protein kinase superfamily. Ser/Thr protein kinase family.

The catalysed reaction is L-seryl-[protein] + ATP = O-phospho-L-seryl-[protein] + ADP + H(+). It catalyses the reaction L-threonyl-[protein] + ATP = O-phospho-L-threonyl-[protein] + ADP + H(+). This Dictyostelium discoideum (Social amoeba) protein is Probable serine/threonine-protein kinase DDB_G0279719.